The chain runs to 1078 residues: MGDEPPSLEYIQAKDLFPPRELVKEEEKLQVPFPVLPGEGVEYLGSANDAVIAISNYRLHIKFKDSVVNVPLRMIEAVESRDMFQLQIICKDSKVVRCHFSTFKQCQEWLKRLSRATLRPAKQEDLFAFAYHAWCQGVCTDEEEPLIHLCRPGDHVKSRFQIELKRMGFDLQNAWRVSEINNNYKLCQSYPQKLLVPVWITDKELENVATFRSWKRIPVVVYRHTRTGAVIARCSQPEISWWGWRNADDEYLVTSIAKACALNPAVRMPNGNPSNKGNNDGSDNSDTDFDSSLTACPVEGGGVPQKLLIVDARSYTAAVANRAKGGGCECEEYYPNCEVAFMGMANIHSIRNSFQYLRAVCNQVPDPGNWLSALESTKWLQHLSAMLKAATVVASAVDREERPVLVHCSDGWDRTPQIVSLAKILLDPYYRTLEGFQVLVETDWLDYGHKFADRCGHQENREDQNEQCPVFLQWLDCIHQLLFQFPCHFEFNHAFLVKLVQHTYSCLYGTFLANNLCEREMRNIYKRTCSVWSLLRTGNKIFHNLLYMPGSDLVLHPVCHVRALQLWTAVYLPATSPCTPMDDRMEMYLTPASQGPQFHARSLVRLPKTRSMDNLLTACDSGGLLTRTSSDPNLNNHQGNLESCSSSKEGNETEICDIQQQALSIEPKEEDGNDSKSTDHENEDSGSATNQNNNEQNALNNILSIAKPDSIQCKRDRFKSVLEKSSVIPVPSNEGTITDDNSHSNGTSEHLPVPALVTNGSVQNKSCVDVSKAMKLSTELSRTDKKPVFQTQRDEFSFCTSNWDSLPGMMRSVPICEVGLRRPLSYDCSTRSQHSRNGRHTMKLTGNLPASFHCSGPFTKRCRCVMACHTKQVQGSRFLPLACPSPAPLIYQDDDGLPIPSDVVQQRLRQMEASYKQEVDLLRRQVWELQLQLEIRQYCAPPSEPEADYEDDFTCVKESDGSDMDDLYSDKSEDRLSEASWEPVDKKETEVTRWVPDHMASHCFNCDCEFWLAKRRHHCRNCGNVFCAACCHLKLPIPDQQLYDPVLVCNTCYDHIQVSRARELMSQQLKKPLTAASS.

In terms of domain architecture, Myotubularin phosphatase spans 154 to 571 (DHVKSRFQIE…RALQLWTAVY (418 aa)). Residues 267–290 (RMPNGNPSNKGNNDGSDNSDTDFD) form a disordered region. Low complexity predominate over residues 270 to 282 (NGNPSNKGNNDGS). Positions 321, 346, and 347 each coordinate a 1,2-diacyl-sn-glycero-3-phospho-(1D-myo-inositol-3,5-bisphosphate). Residues asparagine 321, asparagine 346, and isoleucine 347 each contribute to the a 1,2-diacyl-sn-glycero-3-phospho-(1D-myo-inositol-3-phosphate) site. Catalysis depends on cysteine 408, which acts as the Phosphocysteine intermediate. 8 residues coordinate a 1,2-diacyl-sn-glycero-3-phospho-(1D-myo-inositol-3,5-bisphosphate): serine 409, aspartate 410, glycine 411, tryptophan 412, aspartate 413, arginine 414, lysine 450, and arginine 454. A 1,2-diacyl-sn-glycero-3-phospho-(1D-myo-inositol-3-phosphate)-binding residues include serine 409, aspartate 410, glycine 411, tryptophan 412, aspartate 413, and arginine 414. Arginine 454 is a binding site for a 1,2-diacyl-sn-glycero-3-phospho-(1D-myo-inositol-3-phosphate). Residues 629-648 (SSDPNLNNHQGNLESCSSSK) show a composition bias toward polar residues. The interval 629–694 (SSDPNLNNHQ…SGSATNQNNN (66 aa)) is disordered. A coiled-coil region spans residues 904-935 (VQQRLRQMEASYKQEVDLLRRQVWELQLQLEI). The disordered stretch occupies residues 960 to 982 (DGSDMDDLYSDKSEDRLSEASWE). Basic and acidic residues predominate over residues 968 to 982 (YSDKSEDRLSEASWE). Residues 997–1057 (DHMASHCFNC…VCNTCYDHIQ (61 aa)) form an FYVE-type zinc finger. Cysteine 1003, cysteine 1006, cysteine 1019, cysteine 1022, cysteine 1027, cysteine 1030, cysteine 1049, and cysteine 1052 together coordinate Zn(2+).

This sequence belongs to the protein-tyrosine phosphatase family. Non-receptor class myotubularin subfamily. In terms of assembly, homooligomeric.

The protein resides in the early endosome membrane. The protein localises to the recycling endosome membrane. Its subcellular location is the late endosome membrane. It localises to the cytoplasmic vesicle. It is found in the phagosome membrane. The catalysed reaction is a 1,2-diacyl-sn-glycero-3-phospho-(1D-myo-inositol-3-phosphate) + H2O = a 1,2-diacyl-sn-glycero-3-phospho-(1D-myo-inositol) + phosphate. It carries out the reaction a 1,2-diacyl-sn-glycero-3-phospho-(1D-myo-inositol-3,5-bisphosphate) + H2O = a 1,2-diacyl-sn-glycero-3-phospho-(1D-myo-inositol-5-phosphate) + phosphate. It catalyses the reaction 1,2-dioctanoyl-sn-glycero-3-phospho-(1-D-myo-inositol-3-phosphate) + H2O = 1,2-dioctanoyl-sn-glycero-3-phospho-(1D-myo-inositol) + phosphate. The enzyme catalyses 1,2-dioctanoyl-sn-glycero-3-phospho-(1D-myo-inositol-3,5-bisphosphate) + H2O = 1,2-dioctanoyl-sn-glycero-3-phospho-(1D-myo-inositol-5-phosphate) + phosphate. Its function is as follows. Lipid phosphatase that specifically dephosphorylates the D-3 position of phosphatidylinositol 3-phosphate and phosphatidylinositol 3,5-bisphosphate, generating phosphatidylinositol and phosphatidylinositol 5-phosphate. Decreases the levels of phosphatidylinositol 3-phosphate, a phospholipid found in cell membranes where it acts as key regulator of both cell signaling and intracellular membrane traffic, in a subset of endosomal membranes to negatively regulate both endocytic recycling and trafficking and/or maturation of endosomes toward lysosomes. Through phosphatidylinositol 3-phosphate turnover in phagosome membranes regulates phagocytosis and phagosome maturation. By decreasing phosphatidylinositol 3-monophosphate (PI3P) levels in immune cells it can also regulate the innate immune response. Beside its lipid phosphatase activity, can also function as a molecular adapter to regulate midbody abscission during mitotic cytokinesis. Can also negatively regulate TGF-beta and BMP signaling through Smad proteins dephosphorylation and retention in endosomes. In Xenopus laevis (African clawed frog), this protein is Phosphatidylinositol-3,5-bisphosphate 3-phosphatase MTMR4 (mtmr4).